A 168-amino-acid chain; its full sequence is Ribosome maturation factor RimP (168 aa).

This sequence belongs to the RimP family.

Its subcellular location is the cytoplasm. In terms of biological role, required for maturation of 30S ribosomal subunits. The chain is Ribosome maturation factor RimP from Bordetella parapertussis (strain 12822 / ATCC BAA-587 / NCTC 13253).